Consider the following 319-residue polypeptide: ADP-L-glycero-D-manno-heptose-6-epimerase (319 aa).

Residues 10–11 (FI), 31–32 (DD), lysine 38, lysine 53, and 75–79 (EGACS) contribute to the NADP(+) site. Tyrosine 139 acts as the Proton acceptor in catalysis. Lysine 143 contributes to the NADP(+) binding site. Position 168 (asparagine 168) interacts with substrate. NADP(+) is bound by residues valine 169 and lysine 177. The active-site Proton acceptor is lysine 177. Substrate is bound by residues serine 179, histidine 186, 200–203 (FEGA), arginine 213, and tyrosine 281.

Belongs to the NAD(P)-dependent epimerase/dehydratase family. HldD subfamily. Homopentamer. NADP(+) serves as cofactor.

It catalyses the reaction ADP-D-glycero-beta-D-manno-heptose = ADP-L-glycero-beta-D-manno-heptose. The protein operates within nucleotide-sugar biosynthesis; ADP-L-glycero-beta-D-manno-heptose biosynthesis; ADP-L-glycero-beta-D-manno-heptose from D-glycero-beta-D-manno-heptose 7-phosphate: step 4/4. In terms of biological role, catalyzes the interconversion between ADP-D-glycero-beta-D-manno-heptose and ADP-L-glycero-beta-D-manno-heptose via an epimerization at carbon 6 of the heptose. This Aromatoleum aromaticum (strain DSM 19018 / LMG 30748 / EbN1) (Azoarcus sp. (strain EbN1)) protein is ADP-L-glycero-D-manno-heptose-6-epimerase.